We begin with the raw amino-acid sequence, 100 residues long: NADH-quinone oxidoreductase subunit K (100 aa).

The next 3 helical transmembrane spans lie at 4 to 24 (LFHGLFLSLILFILGLTSLIV), 28 to 48 (ILFMLISLEIMMNAAALALVV), and 60 to 80 (IMYILAITLAASEASIALALL).

It belongs to the complex I subunit 4L family. In terms of assembly, NDH-1 is composed of 13 different subunits. Subunits NuoA, H, J, K, L, M, N constitute the membrane sector of the complex.

It localises to the cell membrane. The enzyme catalyses a quinone + NADH + 5 H(+)(in) = a quinol + NAD(+) + 4 H(+)(out). NDH-1 shuttles electrons from NADH, via FMN and iron-sulfur (Fe-S) centers, to quinones in the respiratory chain. The immediate electron acceptor for the enzyme in this species is believed to be ubiquinone. Couples the redox reaction to proton translocation (for every two electrons transferred, four hydrogen ions are translocated across the cytoplasmic membrane), and thus conserves the redox energy in a proton gradient. The polypeptide is NADH-quinone oxidoreductase subunit K (Buchnera aphidicola subsp. Schizaphis graminum (strain Sg)).